The sequence spans 145 residues: uncharacterized protein (145 aa).

Residues 86–110 (CERCGEEIPEPRLCAIPWTRYCAKC) form a dksA C4-type zinc finger.

This is an uncharacterized protein from Aquifex aeolicus (strain VF5).